Here is a 339-residue protein sequence, read N- to C-terminus: SAGA complex subunit Hfi1 (339 aa).

Belongs to the HFI1 family. In terms of assembly, component of the 1.8 MDa SAGA (Spt-Ada-Gcn5 acetyltransferase) complex, which is composed of 19 subunits tra1, spt7, taf5, ngg1/ada3, sgf73, spt20, spt8, taf12, taf6, hfi1/ada1, ubp8, gcn5, ada2, spt3, sgf29, taf10, taf9, sgf11 and sus1. The SAGA complex is composed of 4 modules, namely the HAT (histone acetyltransferase) module (gcn5, ada2, ngg1/ada3 and sgf29), the DUB (deubiquitinating) module (ubp8, sgf11, sgf73 and sus1), the core or TAF (TBP-associated factor) module (taf5, taf6, taf9, taf10 and taf12), and the Tra1 or SPT (Suppressor of Ty) module (tra1, hfi1/ada1, spt3, spt7, spt8 and spt20). The Tra1/SPT module binds activators, the core module recruits TBP (TATA-binding protein), the HAT module contains the histone H3 acetyltransferase gcn5, and the DUB module comprises the histone H2B deubiquitinase ubp8.

Its subcellular location is the nucleus. Functionally, component of the transcription coactivator SAGA complex. SAGA acts as a general cofactor required for essentially all RNA polymerase II transcription. At the promoters, SAGA is required for transcription pre-initiation complex (PIC) recruitment. It influences RNA polymerase II transcriptional activity through different activities such as TBP interaction (via core/TAF module) and promoter selectivity, interaction with transcription activators (via Tra1/SPT module), and chromatin modification through histone acetylation (via HAT module) and deubiquitination (via DUB module). SAGA preferentially acetylates histones H3 (to form H3K9ac, H3K14ac, H3K18ac and H3K23ac) and H2B and deubiquitinates histone H2B. SAGA interacts with DNA via upstream activating sequences (UASs). The sequence is that of SAGA complex subunit Hfi1 (hfi1) from Schizosaccharomyces pombe (strain 972 / ATCC 24843) (Fission yeast).